Consider the following 171-residue polypeptide: Small ribosomal subunit protein uS5 (171 aa).

The region spanning 15–78 (LEEKVVKINR…EKAKKQLVRI (64 aa)) is the S5 DRBM domain.

The protein belongs to the universal ribosomal protein uS5 family. Part of the 30S ribosomal subunit. Contacts proteins S4 and S8.

In terms of biological role, with S4 and S12 plays an important role in translational accuracy. Its function is as follows. Located at the back of the 30S subunit body where it stabilizes the conformation of the head with respect to the body. This chain is Small ribosomal subunit protein uS5, found in Onion yellows phytoplasma (strain OY-M).